The sequence spans 121 residues: MFDESDLVYSKEHEWVFIDDDIAWVGITKYAVKKLGDIVYIDLPSQDALIVQGECVGEIESTKSVSEIYSPVSGRVIAVNEDVISSPGLLNSDSSVWLFKAECENIPELMDWGQYSEYTKE.

Residues 22–102 (IAWVGITKYA…DSSVWLFKAE (81 aa)) form the Lipoyl-binding domain. The residue at position 63 (K63) is an N6-lipoyllysine.

It belongs to the GcvH family. The glycine cleavage system is composed of four proteins: P, T, L and H. Requires (R)-lipoate as cofactor.

Functionally, the glycine cleavage system catalyzes the degradation of glycine. The H protein shuttles the methylamine group of glycine from the P protein to the T protein. This is Glycine cleavage system H protein from Tropheryma whipplei (strain TW08/27) (Whipple's bacillus).